A 396-amino-acid chain; its full sequence is Cell division protein DivIB (396 aa).

Disordered regions lie at residues 1–23 and 37–116; these read MSKD…SEWQ and EVAL…ATKE. At 1 to 130 the chain is on the cytoplasmic side; it reads MSKDKKNEDK…AKIPGIHILR (130 aa). 2 stretches are compositionally biased toward basic and acidic residues: residues 37-65 and 75-116; these read EVAL…KQDQ and ESAK…ATKE. The chain crosses the membrane as a helical span at residues 131-151; it reads AFTILFPSLLLLIVSAYLLSP. Residues 152 to 396 are Extracellular-facing; that stretch reads YATMKDIRVE…NQTNQRSSRR (245 aa). One can recognise a POTRA domain in the interval 153–223; sequence ATMKDIRVEG…TKFTIKVKEY (71 aa). Positions 361–385 are enriched in basic and acidic residues; that stretch reads KAKQEAKEAEKKQEEEQKKQEEESN. Residues 361–396 form a disordered region; it reads KAKQEAKEAEKKQEEEQKKQEEESNRNQTNQRSSRR. The span at 386 to 396 shows a compositional bias: low complexity; sequence RNQTNQRSSRR.

Belongs to the FtsQ/DivIB family. DivIB subfamily.

It is found in the cell membrane. Functionally, cell division protein that may be involved in stabilizing or promoting the assembly of the division complex. The sequence is that of Cell division protein DivIB from Streptococcus pneumoniae (strain ATCC BAA-255 / R6).